Reading from the N-terminus, the 389-residue chain is GTPase Obg (389 aa).

The Obg domain occupies 1–159; sequence MKFVDEAKIL…REVLLELMLL (159 aa). The region spanning 160 to 333 is the OBG-type G domain; it reads ADVGMLGMPN…LCWDIMEFLK (174 aa). GTP contacts are provided by residues 166–173, 191–195, 213–216, 283–286, and 314–316; these read GMPNAGKS, FTTLV, DIPG, NKVD, and AAI. Ser173 and Thr193 together coordinate Mg(2+). The tract at residues 362–389 is disordered; that stretch reads QLENPDLEDDDEDWDEEDDDGVEFIYQR. Over residues 364–383 the composition is skewed to acidic residues; the sequence is ENPDLEDDDEDWDEEDDDGV.

The protein belongs to the TRAFAC class OBG-HflX-like GTPase superfamily. OBG GTPase family. In terms of assembly, monomer. Mg(2+) is required as a cofactor.

It is found in the cytoplasm. Its function is as follows. An essential GTPase which binds GTP, GDP and possibly (p)ppGpp with moderate affinity, with high nucleotide exchange rates and a fairly low GTP hydrolysis rate. Plays a role in control of the cell cycle, stress response, ribosome biogenesis and in those bacteria that undergo differentiation, in morphogenesis control. This Proteus mirabilis (strain HI4320) protein is GTPase Obg.